The primary structure comprises 187 residues: Phosphatidylethanolamine-binding protein 1 (187 aa).

2 positions are modified to phosphoserine: Ser6 and Ser13. Thr42 carries the phosphothreonine modification. Residues Ser52 and Ser98 each carry the phosphoserine modification. The tract at residues 93–134 (KGGNISSGTVLSDYVGSGPPKGTGLHRYVWLVYEQDGPLKCD) is interaction with RAF1.

It belongs to the phosphatidylethanolamine-binding protein family. As to quaternary structure, has a tendency to form dimers by disulfide cross-linking. Interacts with RAF1 and this interaction is enhanced if RAF1 is phosphorylated on residues 'Ser-338', 'Ser-339', 'Tyr-340' and 'Tyr-341'. Interacts with ALOX15; in response to IL13/interleukin-13, prevents the interaction of PEBP1 with RAF1 to activate the ERK signaling cascade.

The protein localises to the cytoplasm. Binds ATP, opioids and phosphatidylethanolamine. Has lower affinity for phosphatidylinositol and phosphatidylcholine. Serine protease inhibitor which inhibits thrombin, neuropsin and chymotrypsin but not trypsin, tissue type plasminogen activator and elastase. Inhibits the kinase activity of RAF1 by inhibiting its activation and by dissociating the RAF1/MEK complex and acting as a competitive inhibitor of MEK phosphorylation. Functionally, HCNP may be involved in the function of the presynaptic cholinergic neurons of the central nervous system. HCNP increases the production of choline acetyltransferase but not acetylcholinesterase. Seems to be mediated by a specific receptor. This Oryctolagus cuniculus (Rabbit) protein is Phosphatidylethanolamine-binding protein 1 (PEBP1).